A 650-amino-acid chain; its full sequence is Acetoacetyl-coenzyme A synthetase (650 aa).

199 to 202 is a binding site for CoA; the sequence is YNGK. ATP contacts are provided by residues 392-394, Asp-504, Arg-519, and Arg-530; that span reads GSP. Residue Val-546 participates in Mg(2+) binding. Arg-587 lines the CoA pocket. Lys-612 carries the post-translational modification N6-acetyllysine.

Belongs to the ATP-dependent AMP-binding enzyme family. Mg(2+) is required as a cofactor. Acetylated. Deacetylation by the SIR2-homolog deacetylase activates the enzyme.

It catalyses the reaction acetoacetate + ATP + CoA = acetoacetyl-CoA + AMP + diphosphate. Its pathway is biopolymer metabolism; poly-(R)-3-hydroxybutanoate degradation. Functionally, catalyzes the conversion of acetoacetate into acetoacetyl-CoA. Is involved in poly-3-hydroxybutyrate (PHB) degradation, which allows growth of R.meliloti on PHB cycle intermediates. The polypeptide is Acetoacetyl-coenzyme A synthetase (Rhizobium meliloti (strain 1021) (Ensifer meliloti)).